Consider the following 92-residue polypeptide: Large ribosomal subunit protein bL28 (92 aa).

It belongs to the bacterial ribosomal protein bL28 family.

The chain is Large ribosomal subunit protein bL28 from Borrelia garinii subsp. bavariensis (strain ATCC BAA-2496 / DSM 23469 / PBi) (Borreliella bavariensis).